The primary structure comprises 889 residues: DNA gyrase subunit A (889 aa).

A Topo IIA-type catalytic domain is found at 35–501 (LPDVRDGLKP…GFEDLEDEDL (467 aa)). Residue Y123 is the O-(5'-phospho-DNA)-tyrosine intermediate of the active site. A GyrA-box motif is present at residues 528–534 (QNRGGRG). The tract at residues 811–889 (KEDAEDETNE…IQQSLDEDEE (79 aa)) is disordered. Positions 813-823 (DAEDETNEDEQ) are enriched in acidic residues. Basic and acidic residues predominate over residues 863–875 (DGRIEVRQDFMDR). Over residues 876 to 889 (VEEDIQQSLDEDEE) the composition is skewed to acidic residues.

It belongs to the type II topoisomerase GyrA/ParC subunit family. In terms of assembly, heterotetramer, composed of two GyrA and two GyrB chains. In the heterotetramer, GyrA contains the active site tyrosine that forms a transient covalent intermediate with DNA, while GyrB binds cofactors and catalyzes ATP hydrolysis.

The protein resides in the cytoplasm. It catalyses the reaction ATP-dependent breakage, passage and rejoining of double-stranded DNA.. A type II topoisomerase that negatively supercoils closed circular double-stranded (ds) DNA in an ATP-dependent manner to modulate DNA topology and maintain chromosomes in an underwound state. Negative supercoiling favors strand separation, and DNA replication, transcription, recombination and repair, all of which involve strand separation. Also able to catalyze the interconversion of other topological isomers of dsDNA rings, including catenanes and knotted rings. Type II topoisomerases break and join 2 DNA strands simultaneously in an ATP-dependent manner. The chain is DNA gyrase subunit A from Staphylococcus aureus.